A 473-amino-acid chain; its full sequence is Psoralen synthase (473 aa).

A helical membrane pass occupies residues 1–17 (YFFPLFLVTIFLYKWLV). The interval 350 to 355 (TAPLLV) is substrate specificity. Cysteine 425 serves as a coordination point for heme.

It belongs to the cytochrome P450 family. It depends on heme as a cofactor.

It is found in the microsome membrane. It carries out the reaction (7S)-marmesin + reduced [NADPH--hemoprotein reductase] + O2 = psoralen + acetone + oxidized [NADPH--hemoprotein reductase] + 2 H2O + H(+). It participates in secondary metabolite biosynthesis. In terms of biological role, involved in the biosynthesis of coumarins and furanocoumarins (FCs), natural products required for defense responses against attacks by predators with potential medical and agroindustrial usages such as anticoagulant, rodenticide and artificial vanilla substitutes. Involved in linear furanocumarin (psoralen) biosynthesis. Converts marmesin to psoralen and, with much lower affinity, 5-hydroxymarmesin to bergaptol. The chain is Psoralen synthase from Pastinaca sativa (Wild parsnip).